A 335-amino-acid chain; its full sequence is Acetyl-coenzyme A carboxylase carboxyl transferase subunit alpha (335 aa).

The CoA carboxyltransferase C-terminal domain occupies 40 to 294; that stretch reads QLETLAARRR…KEAIEKHLNA (255 aa).

Belongs to the AccA family. As to quaternary structure, acetyl-CoA carboxylase is a heterohexamer composed of biotin carboxyl carrier protein (AccB), biotin carboxylase (AccC) and two subunits each of ACCase subunit alpha (AccA) and ACCase subunit beta (AccD).

Its subcellular location is the cytoplasm. The catalysed reaction is N(6)-carboxybiotinyl-L-lysyl-[protein] + acetyl-CoA = N(6)-biotinyl-L-lysyl-[protein] + malonyl-CoA. It functions in the pathway lipid metabolism; malonyl-CoA biosynthesis; malonyl-CoA from acetyl-CoA: step 1/1. Component of the acetyl coenzyme A carboxylase (ACC) complex. First, biotin carboxylase catalyzes the carboxylation of biotin on its carrier protein (BCCP) and then the CO(2) group is transferred by the carboxyltransferase to acetyl-CoA to form malonyl-CoA. The sequence is that of Acetyl-coenzyme A carboxylase carboxyl transferase subunit alpha from Prochlorococcus marinus (strain AS9601).